The following is a 246-amino-acid chain: Probable transcriptional regulatory protein Ent638_2432 (246 aa).

Belongs to the TACO1 family.

It localises to the cytoplasm. This Enterobacter sp. (strain 638) protein is Probable transcriptional regulatory protein Ent638_2432.